The sequence spans 319 residues: Transcription factor STKL2 (319 aa).

The tract at residues 1–119 (MAPLESPATA…NKKANPQRVW (119 aa)) is disordered. Over residues 21 to 34 (EIFKSSSEESKPKD) the composition is skewed to basic and acidic residues. The segment covering 38 to 55 (VPSSKTLKSPSAAVNSKT) has biased composition (polar residues). Over residues 89–112 (RAGEGSTSRDMHVKRVKKEDDNKK) the composition is skewed to basic and acidic residues.

The protein belongs to the GeBP family. Expressed strongly in leaves and flowers, weakly in roots, and very weakly in stems.

It localises to the nucleus. Transcription repressor that binds DNA in a sequence-specific manner, 5'-GCCT-3', to regulate the expression of PGR. Acts as a modulatory component for the glucose-triggered developmental leaf growth process. In Arabidopsis thaliana (Mouse-ear cress), this protein is Transcription factor STKL2.